Consider the following 51-residue polypeptide: Cytoplasmic FMR1-interacting protein 1 (51 aa).

Belongs to the CYFIP family. As to quaternary structure, component of the WAVE1 complex composed of ABI2, CYFIP1 or CYFIP2, BRK1, NCKAP1 and WASF1/WAVE1. Within the complex, a heterodimer containing NCKAP1 and CYFIP1 interacts with a heterotrimer formed by WAVE1, ABI2 and BRK1. Component of the CYFIP1-EIF4E-FMR1 complex which is composed of CYFIP, EIF4E and FMR1. Interacts with FMR1 but does not bind to related proteins FXR1 or FXR2. Interaction with EIF4E stimulates FMR1 binding. Component of the WAVE2 complex composed of ABI1, CYFIP1/SRA1, NCKAP1/NAP1 (NCKAP1l/HEM1 in hematopoietic cells) and WASF2/WAVE2. Interacts with the active GTP-bound form of RAC1. Interacts through its C-terminus with the C-terminus of DPYSL2/CRMP2 which is necessary for DPYSL2-induced axon outgrowth. Interacts with NYAP1, NYAP2 and MYO16. Interacts with TMEM108 (via N-terminus); the interaction associates TMEM108 with the WAVE1 complex.

It localises to the cytoplasm. Its subcellular location is the perinuclear region. The protein resides in the cell projection. It is found in the lamellipodium. The protein localises to the ruffle. It localises to the synapse. Its subcellular location is the synaptosome. In terms of biological role, component of the CYFIP1-EIF4E-FMR1 complex which binds to the mRNA cap and mediates translational repression. In the CYFIP1-EIF4E-FMR1 complex this subunit is an adapter between EIF4E and FMR1. Promotes the translation repression activity of FMR1 in brain probably by mediating its association with EIF4E and mRNA. Regulates formation of membrane ruffles and lamellipodia. Plays a role in axon outgrowth. Binds to F-actin but not to RNA. Part of the WAVE complex that regulates actin filament reorganization via its interaction with the Arp2/3 complex. Actin remodeling activity is regulated by RAC1. Regulator of epithelial morphogenesis. As component of the WAVE1 complex, required for BDNF-NTRK2 endocytic trafficking and signaling from early endosomes. This chain is Cytoplasmic FMR1-interacting protein 1, found in Bos taurus (Bovine).